The following is a 74-amino-acid chain: Kappa-stichotoxin-Shd5a (74 aa).

The N-terminal stretch at 1–22 is a signal peptide; that stretch reads MKFQVIAAVLLIAFCLCVVVTA. The propeptide occupies 23 to 39; that stretch reads RMELQDVEDVENGFQKR. Residues 42 to 74 enclose the ShKT domain; that stretch reads CIDTIPQSRCTAFQCKHSMKYRLSFCRKTCGTC. 3 disulfide bridges follow: C42–C74, C51–C67, and C56–C71.

It belongs to the sea anemone type 1 potassium channel toxin family. Type 1a subfamily.

It is found in the secreted. The protein localises to the nematocyst. Inhibits voltage-gated potassium channels (Kv) with higher potency for Kv1.1/KCNA1 and Kv1.3/KCNA3. This is Kappa-stichotoxin-Shd5a from Stichodactyla haddoni (Saddle carpet anemone).